We begin with the raw amino-acid sequence, 550 residues long: Integral membrane protein DGCR2/IDD (550 aa).

The signal sequence occupies residues 1–20 (MVPKADSGAFLLLFLLVLTV). Residues 21–349 (TEPLRPELRC…LFDSMASGMR (329 aa)) lie on the Extracellular side of the membrane. One can recognise an LDL-receptor class A domain in the interval 28–68 (LRCNPGQFACRSGTIQCIPLPWQCDGWATCEDESDEANCPE). 3 disulfides stabilise this stretch: Cys-30–Cys-44, Cys-37–Cys-57, and Cys-51–Cys-66. A disordered region spans residues 69-92 (VTGEVRPHHGKEAVDPRQGRARGG). Residues 71–92 (GEVRPHHGKEAVDPRQGRARGG) show a composition bias toward basic and acidic residues. The C-type lectin domain occupies 115 to 241 (CPTGWHHYEG…FCAQLQCFHF (127 aa)). 2 cysteine pairs are disulfide-bonded: Cys-145/Cys-265 and Cys-233/Cys-257. Residues Asn-149 and Asn-196 are each glycosylated (N-linked (GlcNAc...) asparagine). Residues 270–333 (TCVDIKDNVV…PKECCKFMCL (64 aa)) enclose the VWFC domain. Residues 350–368 (LVVSCISSFLILSLLLFMV) form a helical membrane-spanning segment. Over 369-550 (HRLRQRRRER…HSRSSLNTVV (182 aa)) the chain is Cytoplasmic. Position 381 is a phosphoserine (Ser-381). A disordered region spans residues 500–550 (AGASLADLEDSADSSSALLVPPDPAQSGSTPAAEALPGGGRHSRSSLNTVV).

Predominantly expressed in brain, heart, lung and fetal kidney. Low levels in liver and adult kidney.

The protein resides in the membrane. Putative adhesion receptor, that could be involved in cell-cell or cell-matrix interactions required for normal cell differentiation and migration. In Homo sapiens (Human), this protein is Integral membrane protein DGCR2/IDD (DGCR2).